Reading from the N-terminus, the 427-residue chain is Glutamate-1-semialdehyde 2,1-aminomutase (427 aa).

Position 263 is an N6-(pyridoxal phosphate)lysine (K263).

It belongs to the class-III pyridoxal-phosphate-dependent aminotransferase family. HemL subfamily. As to quaternary structure, homodimer. Pyridoxal 5'-phosphate is required as a cofactor.

It localises to the cytoplasm. The enzyme catalyses (S)-4-amino-5-oxopentanoate = 5-aminolevulinate. It functions in the pathway porphyrin-containing compound metabolism; protoporphyrin-IX biosynthesis; 5-aminolevulinate from L-glutamyl-tRNA(Glu): step 2/2. In Caldicellulosiruptor saccharolyticus (strain ATCC 43494 / DSM 8903 / Tp8T 6331), this protein is Glutamate-1-semialdehyde 2,1-aminomutase.